Consider the following 26-residue polypeptide: DEAD-box ATP-dependent RNA helicase 1 (26 aa).

The short motif at 1-10 (RELLMGIFEK) is the Q motif element. 11 to 16 (NGTGKT) provides a ligand contact to ATP. The region spanning 11 to 26 (NGTGKTAAFVIPLLQK) is the Helicase ATP-binding domain.

This sequence belongs to the DEAD box helicase family. DDX6/DHH1 subfamily.

It is found in the cytoplasm. The protein resides in the P-body. It carries out the reaction ATP + H2O = ADP + phosphate + H(+). Functionally, ATP-dependent RNA helicase involved in mRNA turnover, and more specifically in mRNA decapping. The polypeptide is DEAD-box ATP-dependent RNA helicase 1 (Catharanthus roseus (Madagascar periwinkle)).